Reading from the N-terminus, the 95-residue chain is Antitoxin VapB41 (95 aa).

In terms of biological role, antitoxin component of a type II toxin-antitoxin (TA) system. The polypeptide is Antitoxin VapB41 (vapB41) (Mycobacterium tuberculosis (strain CDC 1551 / Oshkosh)).